Reading from the N-terminus, the 224-residue chain is 25 kDa integral membrane protein (224 aa).

At methionine 1 to asparagine 12 the chain is on the cytoplasmic side. A helical membrane pass occupies residues isoleucine 13–valine 33. At isoleucine 34–serine 52 the chain is on the extracellular side. A helical membrane pass occupies residues isoleucine 53–isoleucine 73. Over glycine 74 to lysine 80 the chain is Cytoplasmic. A helical transmembrane segment spans residues cysteine 81–alanine 101. Residues threonine 102 to aspartate 189 lie on the Extracellular side of the membrane. N-linked (GlcNAc...) asparagine glycosylation occurs at asparagine 120. Residues isoleucine 190–phenylalanine 210 traverse the membrane as a helical segment. Topologically, residues threonine 211–alanine 224 are cytoplasmic.

Belongs to the tetraspanin (TM4SF) family.

The protein localises to the membrane. The polypeptide is 25 kDa integral membrane protein (Schistosoma japonicum (Blood fluke)).